The sequence spans 248 residues: Cobalt-precorrin-6A reductase (248 aa).

Belongs to the precorrin-6x reductase family.

It catalyses the reaction Co-precorrin-6B + NAD(+) = Co-precorrin-6A + NADH + H(+). It functions in the pathway cofactor biosynthesis; adenosylcobalamin biosynthesis; cob(II)yrinate a,c-diamide from sirohydrochlorin (anaerobic route): step 7/10. In terms of biological role, catalyzes the reduction of the macrocycle of cobalt-precorrin-6A to cobalt-precorrin-6B. In Methanococcus maripaludis (Methanococcus deltae), this protein is Cobalt-precorrin-6A reductase (cbiJ).